The sequence spans 157 residues: Crossover junction endodeoxyribonuclease RuvC (157 aa).

Residues D7, E66, and D139 contribute to the active site. D7, E66, and D139 together coordinate Mg(2+).

It belongs to the RuvC family. In terms of assembly, homodimer which binds Holliday junction (HJ) DNA. The HJ becomes 2-fold symmetrical on binding to RuvC with unstacked arms; it has a different conformation from HJ DNA in complex with RuvA. In the full resolvosome a probable DNA-RuvA(4)-RuvB(12)-RuvC(2) complex forms which resolves the HJ. It depends on Mg(2+) as a cofactor.

It localises to the cytoplasm. It catalyses the reaction Endonucleolytic cleavage at a junction such as a reciprocal single-stranded crossover between two homologous DNA duplexes (Holliday junction).. Functionally, the RuvA-RuvB-RuvC complex processes Holliday junction (HJ) DNA during genetic recombination and DNA repair. Endonuclease that resolves HJ intermediates. Cleaves cruciform DNA by making single-stranded nicks across the HJ at symmetrical positions within the homologous arms, yielding a 5'-phosphate and a 3'-hydroxyl group; requires a central core of homology in the junction. The consensus cleavage sequence is 5'-(A/T)TT(C/G)-3'. Cleavage occurs on the 3'-side of the TT dinucleotide at the point of strand exchange. HJ branch migration catalyzed by RuvA-RuvB allows RuvC to scan DNA until it finds its consensus sequence, where it cleaves and resolves the cruciform DNA. The sequence is that of Crossover junction endodeoxyribonuclease RuvC from Helicobacter pylori (strain P12).